A 153-amino-acid chain; its full sequence is Agglutinin (153 aa).

Residues 22–25 (NAWE) and N46 contribute to the beta-D-galactosyl-(1-&gt;3)-N-acetyl-D-galactosamine site. The region spanning 58 to 153 (GDSAEYLIIN…DNQKWYFDAK (96 aa)) is the Ricin B-type lectin domain.

As to quaternary structure, homodimer.

Lectin that primarily recognizes glycans with a non-reducing terminal N-acetylgalactosamine (GalNAc), with a preference for the alpha- over the beta-anomer. Can also bind non-reducing terminal galactose (Gal) residues but with a lower affinity. Strongly interacts with glycolipid type glycans with terminal non-reducing Gal or GalNAc but fails to bind sialylated or fucosylated forms of the same glycans. Strongly interacts with galactosylated N-glycans, displaying highest affinity for alpha-1-3 branched mono-antennary N-glycans but also binding to multi-antennary glycans. The polypeptide is Agglutinin (Sclerotinia sclerotiorum (strain ATCC 18683 / 1980 / Ss-1) (White mold)).